The following is a 162-amino-acid chain: UPF0178 protein RSKD131_2223 (162 aa).

The protein belongs to the UPF0178 family.

The polypeptide is UPF0178 protein RSKD131_2223 (Cereibacter sphaeroides (strain KD131 / KCTC 12085) (Rhodobacter sphaeroides)).